A 1283-amino-acid polypeptide reads, in one-letter code: Peroxisomal ATPase PEX1 (1283 aa).

The segment at 346-367 is disordered; the sequence is SKTKQNVLSPEKEKQMSEPLDQ. Serine 354 carries the post-translational modification Phosphoserine. Residues 355–367 are compositionally biased toward basic and acidic residues; it reads PEKEKQMSEPLDQ. ATP contacts are provided by residues 599 to 606 and 881 to 888; these read GGKGSGKS and GPPGTGKT. 3 positions are modified to phosphoserine: serine 1181, serine 1209, and serine 1211. The segment at 1260–1283 is disordered; sequence FQNPKRRKNQSGTMFRPGQKVTLA.

The protein belongs to the AAA ATPase family. Homooligomer; homooligomerizes in the cytosol, interaction with PEX6 promotes dissociation of the homooligomer. Interacts with PEX6; forming the PEX1-PEX6 AAA ATPase complex, which is composed of a heterohexamer formed by a trimer of PEX1-PEX6 dimers. Interacts indirectly with PEX26, via its interaction with PEX6.

The protein localises to the cytoplasm. Its subcellular location is the cytosol. The protein resides in the peroxisome membrane. It catalyses the reaction ATP + H2O = ADP + phosphate + H(+). Component of the PEX1-PEX6 AAA ATPase complex, a protein dislocase complex that mediates the ATP-dependent extraction of the PEX5 receptor from peroxisomal membranes, an essential step for PEX5 recycling. Specifically recognizes PEX5 monoubiquitinated at 'Cys-11', and pulls it out of the peroxisome lumen through the PEX2-PEX10-PEX12 retrotranslocation channel. Extraction by the PEX1-PEX6 AAA ATPase complex is accompanied by unfolding of the TPR repeats and release of bound cargo from PEX5. This Homo sapiens (Human) protein is Peroxisomal ATPase PEX1.